A 335-amino-acid polypeptide reads, in one-letter code: Nucleoid-associated protein YejK (335 aa).

It belongs to the YejK family.

The protein resides in the cytoplasm. Its subcellular location is the nucleoid. The chain is Nucleoid-associated protein YejK from Shigella boydii serotype 18 (strain CDC 3083-94 / BS512).